A 1196-amino-acid polypeptide reads, in one-letter code: DNA-directed RNA polymerase I subunit RPA2 (1196 aa).

The segment at 1097–1124 (CRECGSILTTQSSVPKIGSMVTIRCRRC) adopts a C4-type zinc-finger fold.

Belongs to the RNA polymerase beta chain family. Component of the RNA polymerase I (Pol I) complex consisting of 14 subunits.

It is found in the nucleus. The protein resides in the nucleolus. The catalysed reaction is RNA(n) + a ribonucleoside 5'-triphosphate = RNA(n+1) + diphosphate. Its function is as follows. DNA-dependent RNA polymerase catalyzes the transcription of DNA into RNA using the four ribonucleoside triphosphates as substrates. Second largest core component of RNA polymerase I which synthesizes ribosomal RNA precursors. Proposed to contribute to the polymerase catalytic activity and forms the polymerase active center together with the largest subunit. Pol I is composed of mobile elements and RPA2 is part of the core element with the central large cleft and probably a clamp element that moves to open and close the cleft. The sequence is that of DNA-directed RNA polymerase I subunit RPA2 (RPA2) from Eremothecium gossypii (strain ATCC 10895 / CBS 109.51 / FGSC 9923 / NRRL Y-1056) (Yeast).